We begin with the raw amino-acid sequence, 314 residues long: Methionyl-tRNA formyltransferase (314 aa).

112–115 (SLLP) contacts (6S)-5,6,7,8-tetrahydrofolate.

This sequence belongs to the Fmt family.

It catalyses the reaction L-methionyl-tRNA(fMet) + (6R)-10-formyltetrahydrofolate = N-formyl-L-methionyl-tRNA(fMet) + (6S)-5,6,7,8-tetrahydrofolate + H(+). In terms of biological role, attaches a formyl group to the free amino group of methionyl-tRNA(fMet). The formyl group appears to play a dual role in the initiator identity of N-formylmethionyl-tRNA by promoting its recognition by IF2 and preventing the misappropriation of this tRNA by the elongation apparatus. This is Methionyl-tRNA formyltransferase from Aeromonas hydrophila subsp. hydrophila (strain ATCC 7966 / DSM 30187 / BCRC 13018 / CCUG 14551 / JCM 1027 / KCTC 2358 / NCIMB 9240 / NCTC 8049).